Reading from the N-terminus, the 266-residue chain is Glutamate racemase (266 aa).

Substrate is bound by residues 7 to 8 (DS) and 39 to 40 (YG). Residue Cys70 is the Proton donor/acceptor of the active site. A substrate-binding site is contributed by 71 to 72 (NT). The active-site Proton donor/acceptor is Cys186. Position 187-188 (187-188 (TH)) interacts with substrate.

Belongs to the aspartate/glutamate racemases family.

The catalysed reaction is L-glutamate = D-glutamate. Its pathway is cell wall biogenesis; peptidoglycan biosynthesis. Its function is as follows. Provides the (R)-glutamate required for cell wall biosynthesis. This chain is Glutamate racemase, found in Campylobacter curvus (strain 525.92).